The sequence spans 393 residues: Tryptophan 2,3-dioxygenase (393 aa).

Substrate-binding positions include 56–60 (FIVTH) and Arg-127. His-312 serves as a coordination point for heme. Thr-327 is a binding site for substrate.

Belongs to the tryptophan 2,3-dioxygenase family. Homotetramer. Dimer of dimers. Requires heme as cofactor.

The enzyme catalyses L-tryptophan + O2 = N-formyl-L-kynurenine. It participates in amino-acid degradation; L-tryptophan degradation via kynurenine pathway; L-kynurenine from L-tryptophan: step 1/2. Its pathway is pigment biosynthesis; ommochrome biosynthesis. Stimulated by low concentrations of hydrogen peroxide (5 uM), ascorbate (0.1-0.3 mM), and sodium hydrosulfite (0.1 mM). Inhibited by high concentrations of hydrogen peroxide (0.1 mM), ascorbate (10 mM), and sodium hydrosulfite (1 mM). Its function is as follows. Heme-dependent dioxygenase that catalyzes the oxidative cleavage of the L-tryptophan (L-Trp) pyrrole ring and converts L-tryptophan to N-formyl-L-kynurenine. Catalyzes the oxidative cleavage of the indole moiety. This Aedes aegypti (Yellowfever mosquito) protein is Tryptophan 2,3-dioxygenase.